We begin with the raw amino-acid sequence, 332 residues long: HTH-type transcriptional regulator IdnR (332 aa).

In terms of domain architecture, HTH lacI-type spans 6-60; the sequence is ISLQDIATLAGVTKMTVSRYIRSPKKVAKETGERIAKIMEEINYIPNRAPGMLLN. Residues 8–27 constitute a DNA-binding region (H-T-H motif); it reads LQDIATLAGVTKMTVSRYIR.

Its function is as follows. Idn operon regulator. May repress gntKU and gntT genes when growing on L-idonate. This Escherichia coli (strain K12) protein is HTH-type transcriptional regulator IdnR (idnR).